We begin with the raw amino-acid sequence, 1325 residues long: Sperm-specific sodium:proton exchanger (1325 aa).

The signal sequence occupies residues 1-29 (MKKRVVKLRELVPAVAALAVAVLIQSATG). Positions 28-68 (TGSSGGSGHTPTTQATHADDHDLTTHNGTEEHDDGHDDGHD) are disordered. At 30–76 (SSGGSGHTPTTQATHADDHDLTTHNGTEEHDDGHDDGHDDLHAHAPK) the chain is on the extracellular side. Residues 44–68 (HADDHDLTTHNGTEEHDDGHDDGHD) are compositionally biased toward basic and acidic residues. A 1,2-diacylglycero-3-phosphate is bound at residue His73. A helical membrane pass occupies residues 77-96 (VIVFISGSCLFGAISRSLFK). Over 97–101 (KLPIP) the chain is Cytoplasmic. A helical membrane pass occupies residues 102–119 (YTVVLLILGAILGVVASN). Over 120–135 (VPLVEEHTRDVAHMDP) the chain is Extracellular. The chain crosses the membrane as a helical span at residues 136–152 (HVLLQIFLPVLIFESAF). At 153 to 162 (AMDVHTFMRS) the chain is on the cytoplasmic side. Residues 163–188 (FSQVCILALFGLVVASVLTAVLAMNL) form a helical membrane-spanning segment. The transport core domain stretch occupies residues 163 to 250 (FSQVCILALF…AIVIFNVFMK (88 aa)). Residues 189–194 (FNYNWN) lie on the Extracellular side of the membrane. A helical transmembrane segment spans residues 195-220 (FSEAMMFGAIMSATDPVAVVALLKDL). Topologically, residues 221–223 (GAS) are cytoplasmic. A helical membrane pass occupies residues 224 to 249 (KQLGTIIEGESLLNDGCAIVIFNVFM). Residues 237-238 (ND) carry the Essential for sodium:proton exchange motif. Topologically, residues 250 to 260 (KMVFFPQLTST) are extracellular. The chain crosses the membrane as a helical span at residues 261-292 (VGQNVLYFLQVAVAGPLWGYAVAKVTVFFLSH). The Cytoplasmic segment spans residues 293–296 (IFND). Residues 297–319 (ALVEITITLAATYLTYYIGDIWL) traverse the membrane as a helical segment. At 320-322 (EVS) the chain is on the extracellular side. The helical transmembrane segment at 323–336 (GVLAVVVLGLIVNA) threads the bilayer. Over 337–343 (EKTSISP) the chain is Cytoplasmic. The helical transmembrane segment at 344–377 (EVEVFLHRFWEMLAYLANTLIFMMVGVVVTQKAL) threads the bilayer. Residues 378 to 382 (VAVDK) lie on the Extracellular side of the membrane. Residues 383–412 (MDWFYLIILYLAITIIRGMVISLFSPILSR) traverse the membrane as a helical segment. Residues 383 to 481 (MDWFYLIILY…TTIQTLLRIL (99 aa)) are transport core domain. At 413-418 (IGYGLT) the chain is on the cytoplasmic side. Residues 419–446 (WRNAVIMTWGGLRGAVGLALALVVENLA) form a helical membrane-spanning segment. Residues 447–450 (GNDV) are Extracellular-facing. Residues 451-481 (IGSKFLFHTAGIVVLTLVINATTIQTLLRIL) traverse the membrane as a helical segment. At 482–677 (GMSDISIPKR…GKLMYKICHH (196 aa)) the chain is on the cytoplasmic side. Residues 575–620 (FADMMEEARLRMLKAEKISYWKQFEHGMLAREALRLLVQHAEVAAD) are interacts with the S4 segment of voltage sensor domain. The tract at residues 605-620 (REALRLLVQHAEVAAD) is interacts with the transport core domain; can lock the transporter in the inward conformation. A helical membrane pass occupies residues 678–708 (MAFEVTINIAIVLNIVPIIMEFVVQDKMASV). Residues 709–724 (STMAAPGSTVSSEPSS) lie on the Extracellular side of the membrane. The helical transmembrane segment at 725 to 752 (LQKIEDALRISNYVFFVIYAIEAIVKIL) threads the bilayer. Residues 753–760 (GLGRHYIV) are Cytoplasmic-facing. A helical membrane pass occupies residues 761–784 (SHWNKFDAFILVVALVDIIIAETL). The Extracellular segment spans residues 785–795 (LKGSITINLSS). A helical transmembrane segment spans residues 796 to 822 (IKVVKLFRLLRGLRMLRLTKALIPKLI). Residues 796-857 (IKVVKLFRLL…EEVGKIIDRM (62 aa)) are S4 segment of voltage sensor domain. Residues 823-1325 (LVVNGKINNQ…EEGAAPRVNV (503 aa)) are Cytoplasmic-facing. Positions 860–919 (NKKILRELKHISETGRLQVVKELGLLQREHPGIAVSVKTRQAIRTILNHSRETIHELQGA) are interacts with the S4 segment of voltage sensor domain. A cNMP-binding domain region spans residues 968–1068 (KLIDFIKARA…CETTVQVYFI (101 aa)). Gly1043 lines the 3',5'-cyclic AMP pocket. 3',5'-cyclic GMP-binding residues include Gly1043, Glu1044, and Met1045. Residues Met1045, Gly1046, Arg1053, and Asn1054 each coordinate 3',5'-cyclic AMP. Residues Arg1053 and Asn1054 each coordinate 3',5'-cyclic GMP. The segment at 1237-1325 (MLSRKSSGAA…EEGAAPRVNV (89 aa)) is disordered. Residues 1266 to 1280 (VSPSVPTKTTPKPKS) show a composition bias toward low complexity.

The protein belongs to the monovalent cation:proton antiporter 1 (CPA1) transporter (TC 2.A.36) family. As to quaternary structure, homodimer; the dimerization is stabilized in the presence of phosphatidic acids.

It is found in the cell projection. It localises to the cilium. The protein resides in the flagellum membrane. The catalysed reaction is Na(+)(in) + H(+)(out) = Na(+)(out) + H(+)(in). Its activity is regulated as follows. Gated by voltage and stimulated by cyclic nucleotides which shift the activation voltage closer to resting membrane potential. Not inhibited by common sodium:proton exchanger inhibitors such as amiloride. Its function is as follows. Electroneutral sodium:proton antiporter that regulates intracellular pH of sperm along with capacitation and fertility. Activated in response to egg-derived chemoattractants, couples membrane voltage to sodium:proton exchange and transduces membrane hyperpolarization to cytoplasmic alkalization to cAMP signaling and ultimately to sperm motility. This is Sperm-specific sodium:proton exchanger from Strongylocentrotus purpuratus (Purple sea urchin).